Consider the following 195-residue polypeptide: HTH-type transcriptional regulator BetI (195 aa).

The HTH tetR-type domain occupies 8-68 (EIRRAQLIDA…ATMRHVLRDL (61 aa)). The H-T-H motif DNA-binding region spans 31–50 (TLASVAQRASISTGIVSHYF).

It functions in the pathway amine and polyamine biosynthesis; betaine biosynthesis via choline pathway [regulation]. Repressor involved in the biosynthesis of the osmoprotectant glycine betaine. It represses transcription of the choline transporter BetT and the genes of BetAB involved in the synthesis of glycine betaine. The chain is HTH-type transcriptional regulator BetI from Paraburkholderia xenovorans (strain LB400).